The primary structure comprises 561 residues: Shugoshin 1 (561 aa).

The segment at 1–176 (MAKERCLKKS…DTLGVDFDSG (176 aa)) is necessary for interaction with PPP2CA and PPP2R1A. Positions 7 to 89 (LKKSFQDSLE…DIILQLRKEC (83 aa)) form a coiled coil. The residue at position 14 (serine 14) is a Phosphoserine; by NEK2. The D-box 1 motif lies at 192–200 (RSSLKKHCN). Serine 256 is subject to Phosphoserine. 2 disordered regions span residues 260 to 331 (IQPG…SVSS) and 348 to 441 (FRQK…HLSL). The segment covering 267–296 (KTKEDILESKSEQTKSKQRDTQERKREEKR) has biased composition (basic and acidic residues). Residues 273 to 313 (LESKSEQTKSKQRDTQERKREEKRKANRRKSKRMSKYKENK) adopt a coiled-coil conformation. Over residues 297–307 (KANRRKSKRMS) the composition is skewed to basic residues. Over residues 308–318 (KYKENKSENKK) the composition is skewed to basic and acidic residues. The short motif at 310 to 312 (KEN) is the KEN box element. The span at 364–375 (SEVSLCESSGSG) shows a compositional bias: low complexity. Residues 388-398 (YIQNPTSNSDR) are compositionally biased toward polar residues. The span at 410–421 (KYTDEKETEGSK) shows a compositional bias: basic and acidic residues. The segment covering 422 to 433 (PTKTPTTTPPET) has biased composition (low complexity). Serine 436 carries the phosphoserine modification. The D-box 2 motif lies at 438–446 (HLSLKDITN). A PXVXL/I motif motif is present at residues 451–455 (PVVKI). Positions 457-465 (RLSLSPKKN) match the D-box 3 motif. The residue at position 507 (serine 507) is a Phosphoserine; by NEK2.

The protein belongs to the shugoshin family. As to quaternary structure, interacts with PPP2CA (or PPP2CB), PPP2R1B, PPP2R5A, PPP2R5B, PPP2R5C, PPP2R5D, PPP2R5E, SET, LRRC59, RBM10 (or RBM5), RPL10A, RPL28, RPL7, RPL7A and RPLP1. Interaction with protein phosphatase 2A occurs most probably through direct binding to the regulatory B56 subunits: PPP2R1B, PPP2R5A, PPP2R5B, PPP2R5C, PPP2R5D, PPP2R5E. Interacts with PPP2R1A and NEK2. Isoform 3 interacts with PLK1. Interacts with CDCA8. In terms of processing, ubiquitinated and degraded during mitotic exit by APC/C-Cdh1. Phosphorylation by NEK2 is essential for chromosome congression in mitosis and for the proper attachment of spindle microtubule to the kinetochore. Phosphorylated by PLK1 and AUKRB. Widely expressed. Highly expressed in testis. Expressed in lung, small intestine, breast, liver and placenta. Strongly overexpressed in 90% of breast cancers tested.

The protein localises to the nucleus. Its subcellular location is the chromosome. It is found in the centromere. It localises to the kinetochore. The protein resides in the cytoplasm. The protein localises to the cytoskeleton. Its subcellular location is the spindle pole. It is found in the microtubule organizing center. It localises to the centrosome. The protein resides in the nucleus speckle. Plays a central role in chromosome cohesion during mitosis by preventing premature dissociation of cohesin complex from centromeres after prophase, when most of cohesin complex dissociates from chromosomes arms. May act by preventing phosphorylation of the STAG2 subunit of cohesin complex at the centromere, ensuring cohesin persistence at centromere until cohesin cleavage by ESPL1/separase at anaphase. Essential for proper chromosome segregation during mitosis and this function requires interaction with PPP2R1A. Its phosphorylated form is necessary for chromosome congression and for the proper attachment of spindle microtubule to the kinetochore. Necessary for kinetochore localization of PLK1 and CENPF. May play a role in the tension sensing mechanism of the spindle-assembly checkpoint by regulating PLK1 kinetochore affinity. Isoform 3 plays a role in maintaining centriole cohesion involved in controlling spindle pole integrity. Involved in centromeric enrichment of AUKRB in prometaphase. The sequence is that of Shugoshin 1 from Homo sapiens (Human).